We begin with the raw amino-acid sequence, 592 residues long: Aspartate--tRNA(Asp/Asn) ligase (592 aa).

An L-aspartate-binding site is contributed by Glu177. The aspartate stretch occupies residues 201-204; the sequence is QLFK. Arg223 serves as a coordination point for L-aspartate. ATP is bound by residues 223-225 and Gln232; that span reads RDE. Residue His451 coordinates L-aspartate. Glu485 serves as a coordination point for ATP. Arg492 lines the L-aspartate pocket. 537–540 is a binding site for ATP; the sequence is GLDR.

The protein belongs to the class-II aminoacyl-tRNA synthetase family. Type 1 subfamily. In terms of assembly, homodimer.

The protein resides in the cytoplasm. The catalysed reaction is tRNA(Asx) + L-aspartate + ATP = L-aspartyl-tRNA(Asx) + AMP + diphosphate. Its function is as follows. Aspartyl-tRNA synthetase with relaxed tRNA specificity since it is able to aspartylate not only its cognate tRNA(Asp) but also tRNA(Asn). Reaction proceeds in two steps: L-aspartate is first activated by ATP to form Asp-AMP and then transferred to the acceptor end of tRNA(Asp/Asn). The protein is Aspartate--tRNA(Asp/Asn) ligase of Bacillus subtilis (strain 168).